Reading from the N-terminus, the 145-residue chain is D-aminoacyl-tRNA deacylase (145 aa).

Residues 137–138 (GP) carry the Gly-cisPro motif, important for rejection of L-amino acids motif.

The protein belongs to the DTD family. As to quaternary structure, homodimer.

It is found in the cytoplasm. The catalysed reaction is glycyl-tRNA(Ala) + H2O = tRNA(Ala) + glycine + H(+). It catalyses the reaction a D-aminoacyl-tRNA + H2O = a tRNA + a D-alpha-amino acid + H(+). An aminoacyl-tRNA editing enzyme that deacylates mischarged D-aminoacyl-tRNAs. Also deacylates mischarged glycyl-tRNA(Ala), protecting cells against glycine mischarging by AlaRS. Acts via tRNA-based rather than protein-based catalysis; rejects L-amino acids rather than detecting D-amino acids in the active site. By recycling D-aminoacyl-tRNA to D-amino acids and free tRNA molecules, this enzyme counteracts the toxicity associated with the formation of D-aminoacyl-tRNA entities in vivo and helps enforce protein L-homochirality. The chain is D-aminoacyl-tRNA deacylase from Exiguobacterium sibiricum (strain DSM 17290 / CCUG 55495 / CIP 109462 / JCM 13490 / 255-15).